Here is a 368-residue protein sequence, read N- to C-terminus: MWIKELELKHYRNYDHLLASFSSGLNVFIGNNAQGKTNFLEAIYFLSLTRSHRTRADKELIHFDHSTVSLTGKIQRISGTVDLEINLSDKGRVTKINALKQAKLSDYIGTMMVVLFAPEDLQLVKGAPSLRRKFIDIDLGQIKPVYLSELSHYNHVLKQRNSYLKSAQQIDAAFLAVLDEQLAGYGARVMEHRIDFINALEKEANTHHQAISNGLESLSLSYQSSVVFDKKTNIYQQFLHQLEKNHQKDFFRKNTSVGPHRDDLAFYINGMNANFASQGQHRSLILSLKMAEVSLMKALTGDNPILLLDDVMSELDNTRQTKLLETVIKENVQTFITTTSLDHLSQLPEGIRIFHVTKGTVQVDSDIH.

30–37 (GNNAQGKT) contacts ATP.

The protein belongs to the RecF family.

It is found in the cytoplasm. The RecF protein is involved in DNA metabolism; it is required for DNA replication and normal SOS inducibility. RecF binds preferentially to single-stranded, linear DNA. It also seems to bind ATP. This is DNA replication and repair protein RecF from Streptococcus pyogenes serotype M18 (strain MGAS8232).